A 707-amino-acid chain; its full sequence is ATP-dependent zinc metalloprotease FtsH (707 aa).

At 1 to 25 the chain is on the cytoplasmic side; that stretch reads MSELDNKKDKSKDSNKKPKKPGAFS. Residues 26–46 traverse the membrane as a helical segment; it reads IGNIIIFVIVALLLIWVVFAF. Topologically, residues 47-128 are extracellular; the sequence is LPNNPGTNKS…GTTFTGLELA (82 aa). Residues 129-149 form a helical membrane-spanning segment; it reads TLAIANTSASGIGTLNFSGLV. The Cytoplasmic segment spans residues 150 to 707; the sequence is TPTNQALAIL…IKTDESLDIK (558 aa). Residue 246–253 coordinates ATP; the sequence is GPPGTGKT. His468 contacts Zn(2+). Residue Glu469 is part of the active site. Zn(2+) contacts are provided by His472 and Asp546.

It in the central section; belongs to the AAA ATPase family. The protein in the C-terminal section; belongs to the peptidase M41 family. In terms of assembly, homohexamer. The cofactor is Zn(2+).

The protein resides in the cell membrane. Its function is as follows. Acts as a processive, ATP-dependent zinc metallopeptidase for both cytoplasmic and membrane proteins. Plays a role in the quality control of integral membrane proteins. The chain is ATP-dependent zinc metalloprotease FtsH from Mycoplasma mobile (strain ATCC 43663 / 163K / NCTC 11711) (Mesomycoplasma mobile).